The primary structure comprises 352 residues: N-acetyl-gamma-glutamyl-phosphate reductase (352 aa).

Cysteine 155 is a catalytic residue.

Belongs to the NAGSA dehydrogenase family. Type 1 subfamily.

The protein resides in the cytoplasm. The enzyme catalyses N-acetyl-L-glutamate 5-semialdehyde + phosphate + NADP(+) = N-acetyl-L-glutamyl 5-phosphate + NADPH + H(+). It participates in amino-acid biosynthesis; L-arginine biosynthesis; N(2)-acetyl-L-ornithine from L-glutamate: step 3/4. Functionally, catalyzes the NADPH-dependent reduction of N-acetyl-5-glutamyl phosphate to yield N-acetyl-L-glutamate 5-semialdehyde. This chain is N-acetyl-gamma-glutamyl-phosphate reductase, found in Synechococcus elongatus (strain ATCC 33912 / PCC 7942 / FACHB-805) (Anacystis nidulans R2).